The primary structure comprises 264 residues: COP9 signalosome complex subunit 7b (264 aa).

Ala2 is modified (N-acetylalanine). A PCI domain is found at Ala2–Gly159. A coiled-coil region spans residues Arg194–Glu237. Residues Thr223 to Glu232 show a composition bias toward polar residues. The tract at residues Thr223 to His264 is disordered. Residues Leu235–Gln248 are compositionally biased toward basic and acidic residues.

The protein belongs to the CSN7/EIF3M family. CSN7 subfamily. As to quaternary structure, component of the CSN complex, composed of COPS1/GPS1, COPS2, COPS3, COPS4, COPS5, COPS6, COPS7 (COPS7A or COPS7B) and COPS8 and COPS9. In the complex, it probably interacts directly with COPS1, COPS2, COPS4, COPS5, COPS6 and COPS8. Interacts with EIF3S6.

It is found in the cytoplasm. It localises to the nucleus. Functionally, component of the COP9 signalosome complex (CSN), a complex involved in various cellular and developmental processes. The CSN complex is an essential regulator of the ubiquitin (Ubl) conjugation pathway by mediating the deneddylation of the cullin subunits of SCF-type E3 ligase complexes, leading to decrease the Ubl ligase activity of SCF-type complexes such as SCF, CSA or DDB2. The complex is also involved in phosphorylation of p53/TP53, JUN, I-kappa-B-alpha/NFKBIA, ITPK1 and IRF8/ICSBP, possibly via its association with CK2 and PKD kinases. CSN-dependent phosphorylation of TP53 and JUN promotes and protects degradation by the Ubl system, respectively. The sequence is that of COP9 signalosome complex subunit 7b (Cops7b) from Mus musculus (Mouse).